Consider the following 137-residue polypeptide: Small heat shock protein IbpA (137 aa).

In terms of domain architecture, sHSP spans 28–137 (SQSNGGYPPY…ANKPRRIEIN (110 aa)).

Belongs to the small heat shock protein (HSP20) family. In terms of assembly, monomer. Forms homomultimers of about 100-150 subunits at optimal growth temperatures. Conformation changes to monomers at high temperatures or high ionic concentrations.

It localises to the cytoplasm. Associates with aggregated proteins, together with IbpB, to stabilize and protect them from irreversible denaturation and extensive proteolysis during heat shock and oxidative stress. Aggregated proteins bound to the IbpAB complex are more efficiently refolded and reactivated by the ATP-dependent chaperone systems ClpB and DnaK/DnaJ/GrpE. Its activity is ATP-independent. The sequence is that of Small heat shock protein IbpA from Salmonella choleraesuis (strain SC-B67).